The chain runs to 179 residues: DELTA-actitoxin-Afr1a (179 aa).

The interval 1–29 is N-terminal alpha-helix that contributes to the pore; sequence SADVAGAVIDGAGLGFDVLKTVLEALGNV. Residue Arg31 participates in an N-(acyl)-sphingosylphosphocholine binding. N-acetyl-D-glucosamine 6-sulfate-binding residues include Tyr51 and Arg53. Residues Arg53, Ser54, Arg79, Gly85, Tyr108, Tyr113, Ser114, Trp116, Tyr133, Tyr137, Tyr138, Arg144, and Gly168 each coordinate an N-(acyl)-sphingosylphosphocholine. A trp-rich region, which is important for the binding to lipid membrane region spans residues 105 to 120; it reads SVPYDYNWYSNWWNVR. Tyr138 contacts N-acetyl-D-glucosamine 6-sulfate. The Cell attachment site, crucial for protein stability motif lies at 144 to 146; that stretch reads RGD.

This sequence belongs to the actinoporin family. Sea anemone subfamily. In terms of assembly, octamer or nonamer in membranes. Monomer in the soluble state.

The protein resides in the secreted. It localises to the nematocyst. It is found in the target cell membrane. Its function is as follows. Pore-forming toxin (PFT) that consists of a crown-shaped octamer or nonamer that forms cation-selective hydrophilic pores of about 1.5 nm (inside) and 13 nm (outside). It causes cardiac stimulation and cytolysis (EC(50)=1.6 nM on erythrocytes). Interestingly, the Phe-16 is crucial for hemolysis. Pore formation is a multi-step process that involves specific recognition of membrane sphingomyelin (but neither cholesterol nor phosphatidylcholine) using aromatic rich region and adjacent phosphocholine (POC) binding site, firm binding to the membrane (mainly driven by hydrophobic interactions) accompanied by the transfer of the N-terminal region to the lipid-water interface and finally pore formation after oligomerization of monomers. It is probable that a dimeric form is an assembly intermediate before the complete oligomerization. The formation of stable pores occurs only in vesicles composed of DOPC/SM (there is no oligomerization when the PFT is treated with vesicles of DOPC or SM alone). The transmembrane pore displays 8 lateral perforations, one at each subunit-subunit interface, partially occupied by the acyl-chain region of a bridging lipid. Each pore contains 24 lipid molecules, firmly bound to each subunit, that is, 3 lipids (L1, L2, L3, L4 and/or L5) are associated to each subunit. Lipid L1 bridges 2 subunits, whereas lipids L2 and L3 bind to sites at single subunit. In Actinia fragacea (Strawberry anemone), this protein is DELTA-actitoxin-Afr1a.